A 389-amino-acid polypeptide reads, in one-letter code: Formate-dependent phosphoribosylglycinamide formyltransferase (389 aa).

N(1)-(5-phospho-beta-D-ribosyl)glycinamide contacts are provided by residues 12-13 (EL) and Glu-72. ATP is bound by residues Arg-104, Lys-145, 150 to 155 (SSGKGQ), 185 to 188 (EEFI), and Glu-193. The 193-residue stretch at 109–301 (DLAAKELGLK…EFELHLRAVL (193 aa)) folds into the ATP-grasp domain. The Mg(2+) site is built by Glu-258 and Glu-271. N(1)-(5-phospho-beta-D-ribosyl)glycinamide-binding positions include Asp-278, Lys-350, and 357–358 (RR).

It belongs to the PurK/PurT family. Homodimer.

The catalysed reaction is N(1)-(5-phospho-beta-D-ribosyl)glycinamide + formate + ATP = N(2)-formyl-N(1)-(5-phospho-beta-D-ribosyl)glycinamide + ADP + phosphate + H(+). It functions in the pathway purine metabolism; IMP biosynthesis via de novo pathway; N(2)-formyl-N(1)-(5-phospho-D-ribosyl)glycinamide from N(1)-(5-phospho-D-ribosyl)glycinamide (formate route): step 1/1. Functionally, involved in the de novo purine biosynthesis. Catalyzes the transfer of formate to 5-phospho-ribosyl-glycinamide (GAR), producing 5-phospho-ribosyl-N-formylglycinamide (FGAR). Formate is provided by PurU via hydrolysis of 10-formyl-tetrahydrofolate. This Phocaeicola vulgatus (strain ATCC 8482 / DSM 1447 / JCM 5826 / CCUG 4940 / NBRC 14291 / NCTC 11154) (Bacteroides vulgatus) protein is Formate-dependent phosphoribosylglycinamide formyltransferase.